Reading from the N-terminus, the 3739-residue chain is Cardiomyopathy-associated protein 5 (3739 aa).

Disordered regions lie at residues 1 to 205 (MESG…PPIT), 268 to 814 (SLEP…SAFV), 835 to 884 (VSVS…AIQS), 967 to 1270 (LSED…SDVP), 1288 to 1313 (TQAS…RDAK), 1325 to 1637 (SSAL…NLVS), 1650 to 1969 (EMNR…EKGK), 1986 to 2016 (SSIP…AIEP), 2065 to 2246 (FLSN…WETR), 2273 to 2318 (AVGE…LALD), 2377 to 2498 (VYPE…SAVE), 2513 to 2532 (KKQE…TSKD), and 2579 to 2616 (SADG…SEDQ). Positions 18–47 (ADEEVAQELETEEESEGEGEETAAESEEEP) are enriched in acidic residues. The segment covering 48–62 (DARLSDEDEEGKTKQ) has biased composition (basic and acidic residues). A compositionally biased stretch (polar residues) spans 84 to 106 (TWETNSSRSSTPWASGESQTSGI). A compositionally biased stretch (basic residues) spans 130-153 (RTRKRTQKSKRGSPSLRRKGSKKR). Ser-155 carries the post-translational modification Phosphoserine. 2 stretches are compositionally biased toward polar residues: residues 156-175 (LESQ…SESP) and 325-336 (ADSNLNVPSSTE). Residues 380-406 (ATMVLERAKEELEQNAQGKESSEDDAS) are a coiled coil. 3 stretches are compositionally biased toward basic and acidic residues: residues 479–637 (IVHR…REEE), 644–663 (SIVH…REEE), and 670–730 (SIVH…ERGV). 2 repeat units span residues 482-493 (REEEHAPEPIVH) and 494-505 (REEEHAPEPIVH). The tract at residues 482-720 (REEEHAPEPI…EEHAPEPMVH (239 aa)) is 20 X 12 AA approximate tandem repeats of R-[DE]-[EK]-[EG]-H-[AV]-P-E-[PS]-[IM]-V-[HLR]. A 3; approximate repeat occupies 506-519 (REEEHAPEPESIVH). Copy 4 of the repeat occupies 520-531 (REEEHAPESIVH). One copy of the 5; approximate repeat lies at 532 to 545 (REEEHAPEPVPIVH). Residues 546-559 (REEEHAPEPESIVH) form a 6; approximate repeat. Tandem repeats lie at residues 560–571 (REEEHAPEPIVH), 572–583 (RDKGHALEPIVH), 584–595 (REEEHAPEPIVH), and 596–607 (RDEGHAPEPIVH). The stretch at 608–621 (REEEHVPEPESIVR) is one 11; approximate repeat. The stretch at 622-633 (KGEEHAPEPIVH) is one 12; approximate repeat. A 14; approximate repeat occupies 634 to 647 (REEEQVPEPESIVH). Repeat unit 15 spans residues 648–659 (REEEHAPEPIVH). The stretch at 660 to 673 (REEEQVPEPESIVH) is one 16; approximate repeat. 4 tandem repeats follow at residues 674–685 (REEEHAPEPMVL), 686–696 (REEHAPEPIVR), 697–708 (REEEHAPEPIVH), and 709–720 (REEEHAPEPMVH). A compositionally biased stretch (acidic residues) spans 740-756 (TEPEDSSLEEEIIELDY). A Phosphoserine modification is found at Ser-850. Composition is skewed to polar residues over residues 861-884 (PAMT…AIQS) and 1151-1161 (CLTSPSEQTVL). Composition is skewed to basic and acidic residues over residues 1188-1197 (AETEQNKVEP) and 1230-1242 (EHSE…EESS). The span at 1337–1351 (TSVLPTSQPSVSPES) shows a compositional bias: polar residues. 2 stretches are compositionally biased toward basic and acidic residues: residues 1441-1460 (LEQR…HSPP) and 1476-1486 (TEVKQESKITR). A compositionally biased stretch (polar residues) spans 1522-1540 (ASSSATTVPVTKLDSNSTK). Basic and acidic residues-rich tracts occupy residues 1620–1631 (NDKHEEITRSPD), 1697–1706 (IDSRDRDRSL), 1726–1742 (GPAE…ENRK), 1760–1770 (IEQKEPKRTLH), 1786–1803 (DKPE…ENLE), and 1836–1850 (EKPD…DRKP). A compositionally biased stretch (polar residues) spans 1854 to 1863 (QLESSESTDL). Composition is skewed to basic and acidic residues over residues 1874–1885 (DTDHTSETRNQE), 1896–1916 (LSQE…EGRK), 1992–2001 (KVSDNEDLET), and 2153–2165 (ARKE…HKET). Over residues 2181–2190 (KSAQSAFTRM) the composition is skewed to polar residues. Ser-2192 bears the Phosphoserine mark. 5 stretches are compositionally biased toward basic and acidic residues: residues 2212 to 2244 (GEDR…DGWE), 2279 to 2299 (RMPE…RLEQ), 2306 to 2318 (KLME…LALD), 2377 to 2419 (VYPE…ETDG), and 2429 to 2448 (ELEK…RRFV). At Ser-2411 the chain carries Phosphoserine. Ser-2495 carries the post-translational modification Phosphoserine. The segment covering 2513 to 2523 (KKQETWSDRPT) has biased composition (basic and acidic residues). Residues 2640–2664 (SVDQEESEQMQDKLQYLEEKASFKS) are a coiled coil. Disordered regions lie at residues 2667-2725 (VHDE…QPTV), 2742-2773 (LSPG…SSAE), 2791-2835 (GPEK…GMPL), 2881-2959 (EKNE…EREI), 3027-3047 (LESE…DVNL), and 3111-3174 (PEEP…QKEP). A compositionally biased stretch (basic and acidic residues) spans 2682–2709 (SKLEVPDRKITSLKENKTKETHKTKEEI). Residues 2731-3041 (YFEKYTLIDY…SSQGNEAGNA (311 aa)) form a required for RYR2 clustering region. A compositionally biased stretch (polar residues) spans 2762-2773 (KTLTSFPESSAE). Basic and acidic residues-rich tracts occupy residues 2791 to 2804 (GPEK…HAEM) and 2812 to 2828 (KPDD…DVDS). Position 2905 is a phosphoserine (Ser-2905). Residues 2918–2929 (YILKDDILHDES) show a composition bias toward basic and acidic residues. Polar residues predominate over residues 3030–3047 (EPSSQGNEAGNASPDVNL). Residues 3153-3162 (VWDRTEDQSA) show a composition bias toward basic and acidic residues. Residues 3187-3214 (KSLVSEMDKALDIHKDHEVSALDTAISA) form an amphipathic helix H1 region. Positions 3215–3342 (VKVQLGEFLE…ERLLSAMEST (128 aa)) are B-box coiled-coil; BBC. Positions 3244 to 3323 (FNTIEEKCSK…REAEELDETV (80 aa)) form a coiled coil. The amphipathic helix H2 stretch occupies residues 3301–3318 (SMDTAKDTLETIVREAEE). 2 consecutive Fibronectin type-III domains span residues 3374 to 3475 (VPQP…TAPS) and 3476 to 3568 (TPVI…TRGT). An amphipathic helix H3 region spans residues 3421–3437 (EINELVEEYRLTVKESC). The region spanning 3550-3735 (NASGTSEQSE…LHLGLEPPDS (186 aa)) is the B30.2/SPRY domain.

Interacts with PRKAR2A. Interacts with ACTN2, DES and DTNBP1/dysbindin. Interacts with DMD/dystrophin. Interacts with the calcineurin catalytic subunit PPP3CA. Interacts with TTN. Interacts with CAPN3; this interaction, which results in CMYA5 proteolysis, may protect CAPN3 from autolysis. Interacts with FSD2. In cardiac muscles, identified in a complex composed of FSD2, CMYA5 and RYR2. Post-translationally, phosphorylated by PKA. In terms of tissue distribution, expressed in skin as well as in cardiac muscle. Expressed in skeletal muscle (at protein level).

Its subcellular location is the nucleus. It is found in the cytoplasm. The protein localises to the perinuclear region. The protein resides in the myofibril. It localises to the sarcomere. Its subcellular location is the m line. It is found in the sarcoplasmic reticulum. Functionally, may serve as an anchoring protein that mediates the subcellular compartmentation of protein kinase A (PKA) via binding to PRKAR2A. May attenuate calcineurin ability to induce slow-fiber gene program in muscle and may negatively modulate skeletal muscle regeneration. Plays a role in the assembly of ryanodine receptor (RYR2) clusters in striated muscle. The chain is Cardiomyopathy-associated protein 5 (Cmya5) from Mus musculus (Mouse).